The primary structure comprises 517 residues: Maturase K (517 aa).

This sequence belongs to the intron maturase 2 family. MatK subfamily.

Its subcellular location is the plastid. The protein resides in the chloroplast. Its function is as follows. Usually encoded in the trnK tRNA gene intron. Probably assists in splicing its own and other chloroplast group II introns. This is Maturase K from Dracula chimaera.